Reading from the N-terminus, the 480-residue chain is UDP-N-acetylmuramoylalanine--D-glutamate ligase (480 aa).

Residue 127-133 (GTNGKTT) coordinates ATP.

The protein belongs to the MurCDEF family.

Its subcellular location is the cytoplasm. It catalyses the reaction UDP-N-acetyl-alpha-D-muramoyl-L-alanine + D-glutamate + ATP = UDP-N-acetyl-alpha-D-muramoyl-L-alanyl-D-glutamate + ADP + phosphate + H(+). The protein operates within cell wall biogenesis; peptidoglycan biosynthesis. Cell wall formation. Catalyzes the addition of glutamate to the nucleotide precursor UDP-N-acetylmuramoyl-L-alanine (UMA). This is UDP-N-acetylmuramoylalanine--D-glutamate ligase from Tropheryma whipplei (strain Twist) (Whipple's bacillus).